A 373-amino-acid polypeptide reads, in one-letter code: Spore germination protein A3 (373 aa).

The N-terminal stretch at Met1–Gly17 is a signal peptide. Cys18 carries N-palmitoyl cysteine lipidation. A lipid anchor (S-diacylglycerol cysteine) is attached at Cys18.

This sequence belongs to the GerABKC lipoprotein family.

The protein resides in the cell membrane. Functionally, forms a complex at the inner spore membrane which acts as a receptor for L-alanine, thus is involved in the stimulation of germination in response to alanine. Can stimulate germination in the absence of GerD and GerK gene products (fructose and glucose receptors, respectively), but the response is improved in their presence. The chain is Spore germination protein A3 (gerAC) from Bacillus subtilis (strain 168).